The chain runs to 355 residues: Aromatic amino acid aminotransferase (355 aa).

Lys217 bears the N6-(pyridoxal phosphate)lysine mark.

It belongs to the class-II pyridoxal-phosphate-dependent aminotransferase family. In terms of assembly, homodimer. Pyridoxal 5'-phosphate serves as cofactor.

The enzyme catalyses an aromatic L-alpha-amino acid + 2-oxoglutarate = an aromatic oxo-acid + L-glutamate. In terms of biological role, aminotransferase that catalyzes the conversion of aromatic amino acids and 2-oxoglutarate into corresponding aromatic oxo acids and L-glutamate. This chain is Aromatic amino acid aminotransferase, found in Mycobacterium avium (strain 104).